Here is a 328-residue protein sequence, read N- to C-terminus: D-alanine--D-alanine ligase (328 aa).

Positions 118–317 constitute an ATP-grasp domain; that stretch reads LSVLTKFNIP…MPQMLDNEIT (200 aa). Residue 146–201 participates in ATP binding; that stretch reads KKALGLPFFVKPNQSGSSLGVSKVDALDQLEKALEFAFAEDNEILIESYLNGTEVS. Residues aspartate 272, glutamate 284, and asparagine 286 each contribute to the Mg(2+) site.

The protein belongs to the D-alanine--D-alanine ligase family. Mg(2+) serves as cofactor. It depends on Mn(2+) as a cofactor.

It is found in the cytoplasm. It catalyses the reaction 2 D-alanine + ATP = D-alanyl-D-alanine + ADP + phosphate + H(+). Its pathway is cell wall biogenesis; peptidoglycan biosynthesis. Its function is as follows. Cell wall formation. This is D-alanine--D-alanine ligase from Flavobacterium psychrophilum (strain ATCC 49511 / DSM 21280 / CIP 103535 / JIP02/86).